The chain runs to 918 residues: Importin subunit beta-2 (918 aa).

18 HEAT repeats span residues 11–38 (YVLQ…EAME), 43–92 (QPEF…GGNN), 103–137 (YVKS…TYYR), 145–181 (GLQM…FQLE), 190–222 (EALL…TVIP), 235–263 (FLEI…SFLL), 275–303 (DGIV…FLHA), 320–413 (KDIV…MTNI), 421–449 (IAFP…GAMA), 461–488 (PALI…TLSR), 501–534 (LIPV…IENA), 542–577 (LFYS…AEKC), 583–620 (AMQI…SSLG), 628–678 (PEVY…GLGA), 694–725 (ILKI…YFFN), 777–814 (IDMS…LTHP), 825–858 (DSNW…INLT), and 867–900 (DTIH…SAQI). The segment at 361 to 395 (APRIVKKKEAGNGEDADDNEDDDDDDDDEDGDVDT) is disordered. Residues 372-393 (NGEDADDNEDDDDDDDDEDGDV) are compositionally biased toward acidic residues.

Belongs to the importin beta family. Importin beta-2 subfamily. As to quaternary structure, interacts with Ran (GSP1); interacts specifically with the GTP-bound form of Ran (GTP-Ran), protecting it from GTP hydrolysis and nucleotide exchange. Interacts with nucleoporins NUP1, NUP100 and NUP116. Interacts with NAB2 and HRP1/NAB4; via their rg-NLS. Interacts with TFG2; via its PY-NLS.

It localises to the cytoplasm. It is found in the nucleus. The protein resides in the nuclear pore complex. Its function is as follows. Functions in nuclear protein import as nuclear transport receptor. Serves as receptor for arginine/glycine-rich nuclear localization signals (rg-NLS) and PY-NLS in cargo substrates. Its predominant cargo substrate seems to be mRNA-binding proteins. Required for nuclear transport of NAB2, HRP1/NAB4 and TFG2. Mediates docking of the importin/substrate complex to the nuclear pore complex (NPC) through binding to repeat-containing nucleoporins. The complex is subsequently translocated through the pore by an energy requiring, Ran-dependent mechanism. At the nucleoplasmic side of the NPC, GTP-Ran binding leads to release of the cargo. Efficient GTP-Ran-mediated substrate release requires RNA. The importin is re-exported from the nucleus to the cytoplasm where GTP hydrolysis releases Ran from importin. The directionality of nuclear import is thought to be conferred by an asymmetric distribution of the GTP- and GDP-bound forms of Ran between the cytoplasm and nucleus. The protein is Importin subunit beta-2 of Saccharomyces cerevisiae (strain ATCC 204508 / S288c) (Baker's yeast).